A 292-amino-acid polypeptide reads, in one-letter code: Small ribosomal subunit protein uS2 (292 aa).

The tract at residues 230–292 (RSGGAPGSEK…KKEAGSGEEA (63 aa)) is disordered. Composition is skewed to basic and acidic residues over residues 247 to 259 (EWER…KTEA) and 271 to 292 (PAKE…GEEA).

It belongs to the universal ribosomal protein uS2 family.

The protein is Small ribosomal subunit protein uS2 of Thermobifida fusca (strain YX).